The chain runs to 362 residues: HMG box-containing protein C19G7.04 (362 aa).

The region spanning 135 to 299 (KCFLARLEDE…RLCKSQIKQI (165 aa)) is the SprT-like domain. Positions 306–348 (PNAFQIFLKENSKRLRKLHPHITHKELMKKLSDEYHRTKDAKQ) form a DNA-binding region, HMG box.

The protein resides in the nucleus. The protein localises to the cytoplasm. It is found in the cytoskeleton. Its subcellular location is the spindle. The sequence is that of HMG box-containing protein C19G7.04 from Schizosaccharomyces pombe (strain 972 / ATCC 24843) (Fission yeast).